The following is a 321-amino-acid chain: Tetraacyldisaccharide 4'-kinase (321 aa).

Position 54-61 (54-61 (SVGGTGKT)) interacts with ATP.

This sequence belongs to the LpxK family.

It carries out the reaction a lipid A disaccharide + ATP = a lipid IVA + ADP + H(+). Its pathway is glycolipid biosynthesis; lipid IV(A) biosynthesis; lipid IV(A) from (3R)-3-hydroxytetradecanoyl-[acyl-carrier-protein] and UDP-N-acetyl-alpha-D-glucosamine: step 6/6. In terms of biological role, transfers the gamma-phosphate of ATP to the 4'-position of a tetraacyldisaccharide 1-phosphate intermediate (termed DS-1-P) to form tetraacyldisaccharide 1,4'-bis-phosphate (lipid IVA). In Rickettsia conorii (strain ATCC VR-613 / Malish 7), this protein is Tetraacyldisaccharide 4'-kinase.